The primary structure comprises 297 residues: MKRPDYRTLQALDAVIRERGFERAAQKLCITQSAVSQRIKQLENMFGQPLLVRTVPPRPTEQGQKLLALLRQVELLEEEWLGDEQTGSTPLLLSLAVNADSLATWLLPALANVLSDSPIRLNLQVEDETRTQERLRRGEVVGAVSIQPQALPSCLVDQLGALDYLFVASKEFAQRYFPNGVTRSALLKAPVVAFDHLDDMHQAFLQQNFDLPPGSVPCHIVNSSEAFVQLARQGTTCCMIPHLQIEKELNSGELIDLTPGLFQRRMLYWHRFAPESRMMRRVTDALIDYGHKVLRQD.

Residues 4–60 enclose the HTH lysR-type domain; that stretch reads PDYRTLQALDAVIRERGFERAAQKLCITQSAVSQRIKQLENMFGQPLLVRTVPPRPT. Positions 21-40 form a DNA-binding region, H-T-H motif; sequence FERAAQKLCITQSAVSQRIK.

Belongs to the LysR transcriptional regulatory family. Homodimer.

Functionally, controls the transcription of genes involved in arginine and lysine metabolism. The protein is HTH-type transcriptional regulator ArgP of Klebsiella pneumoniae subsp. pneumoniae (strain ATCC 700721 / MGH 78578).